A 256-amino-acid chain; its full sequence is Hydroxypyruvate/pyruvate aldolase (256 aa).

His-48 serves as the catalytic Proton acceptor. A divalent metal cation contacts are provided by Glu-152 and Asp-178.

The protein belongs to the HpcH/HpaI aldolase family. The cofactor is a divalent metal cation.

It catalyses the reaction D-glyceraldehyde + pyruvate = 2-dehydro-3-deoxy-L-galactonate. In terms of biological role, aldolase which can catalyze in vitro the aldolisation reaction between hydroxypyruvate (HPA) or pyruvate (PA) and D-glyceraldehyde (D-GA). The condensation of pyruvate and D-glyceraldehyde produces 2-dehydro-3-deoxy-L-galactonate as the major product. Has weak activity with hydroxypyruvate and D-glyceraldehyde. The sequence is that of Hydroxypyruvate/pyruvate aldolase from Roseobacter denitrificans (strain ATCC 33942 / OCh 114) (Erythrobacter sp. (strain OCh 114)).